Reading from the N-terminus, the 773-residue chain is Mitochondrial inner membrane m-AAA protease component yta12 (773 aa).

The tract at residues 83 to 119 is disordered; the sequence is FSVTSKRSQNGSSGSNSDANGRKNGQKNDDSKKKGLN. Over residues 87–101 the composition is skewed to low complexity; it reads SKRSQNGSSGSNSDA. 2 consecutive transmembrane segments (helical) span residues 126-146 and 239-259; these read VFEIALNGNTILGGILVAYIL and VLATLLSFAPTLLIIGSVIYL. Valine 298, alanine 299, threonine 340, glycine 341, lysine 342, threonine 343, leucine 344, and histidine 479 together coordinate ATP. Histidine 561 lines the Zn(2+) pocket. Residue glutamate 562 is part of the active site. Residues histidine 565 and aspartate 638 each contribute to the Zn(2+) site. A disordered region spans residues 752–773; it reads EYKNDHDPRNPPIPPSPQQPSA. Residues 761 to 773 are compositionally biased toward pro residues; the sequence is NPPIPPSPQQPSA.

This sequence in the N-terminal section; belongs to the AAA ATPase family. The protein in the C-terminal section; belongs to the peptidase M41 family. As to quaternary structure, component of the m-AAA protease complex. The cofactor is Zn(2+).

The protein resides in the mitochondrion membrane. The enzyme catalyses ATP + H2O = ADP + phosphate + H(+). Functionally, catalytic component of the m-AAA protease, a protease that plays a key role in proteostasis of inner mitochondrial membrane proteins. Possesses both ATPase and protease activities: the ATPase activity is required to unfold substrates, threading them into the internal proteolytic cavity for hydrolysis into small peptide fragments. The complex is necessary for the assembly of mitochondrial respiratory chain and ATPase complexes. The m-AAA protease carries out protein quality control in the inner membrane of the mitochondria by mediating degradation of mistranslated or misfolded polypeptides. It also mediates protein maturation of the mitochondrial ribosomal subunit mrpl32/bL32m by catalyzing the cleavage of the presequence of mrpl32/bL32m prior to assembly into the mitochondrial ribosome. Also acts as a membrane protein dislocase: required to dislocate moderately hydrophobic transmembrane segments from the membrane. In Schizosaccharomyces pombe (strain 972 / ATCC 24843) (Fission yeast), this protein is Mitochondrial inner membrane m-AAA protease component yta12 (yta12).